A 579-amino-acid chain; its full sequence is CTP synthase (579 aa).

The interval 1–281 (MPALRKHPQT…DAYVVRRLNL (281 aa)) is amidoligase domain. Residue Ser23 participates in CTP binding. Ser23 is a UTP binding site. Residues 24 to 29 (SLGKGL) and Asp81 contribute to the ATP site. Residues Asp81 and Glu155 each coordinate Mg(2+). Residues 162 to 164 (DIE), 202 to 207 (KTKPTQ), and Lys238 each bind CTP. UTP contacts are provided by residues 202 to 207 (KTKPTQ) and Lys238. Residues 306–554 (RIALVGKYID…IGAALDYKAA (249 aa)) form the Glutamine amidotransferase type-1 domain. Gly369 provides a ligand contact to L-glutamine. The active-site Nucleophile; for glutamine hydrolysis is the Cys396. L-glutamine is bound by residues 397 to 400 (LGLQ), Glu419, and Arg480. Catalysis depends on residues His527 and Glu529.

Belongs to the CTP synthase family. As to quaternary structure, homotetramer.

The enzyme catalyses UTP + L-glutamine + ATP + H2O = CTP + L-glutamate + ADP + phosphate + 2 H(+). It carries out the reaction L-glutamine + H2O = L-glutamate + NH4(+). It catalyses the reaction UTP + NH4(+) + ATP = CTP + ADP + phosphate + 2 H(+). It functions in the pathway pyrimidine metabolism; CTP biosynthesis via de novo pathway; CTP from UDP: step 2/2. With respect to regulation, allosterically activated by GTP, when glutamine is the substrate; GTP has no effect on the reaction when ammonia is the substrate. The allosteric effector GTP functions by stabilizing the protein conformation that binds the tetrahedral intermediate(s) formed during glutamine hydrolysis. Inhibited by the product CTP, via allosteric rather than competitive inhibition. Catalyzes the ATP-dependent amination of UTP to CTP with either L-glutamine or ammonia as the source of nitrogen. Regulates intracellular CTP levels through interactions with the four ribonucleotide triphosphates. This Mycobacterium sp. (strain KMS) protein is CTP synthase.